The following is a 309-amino-acid chain: Porphobilinogen deaminase (309 aa).

S-(dipyrrolylmethanemethyl)cysteine is present on Cys-241.

This sequence belongs to the HMBS family. Monomer. The cofactor is dipyrromethane.

The enzyme catalyses 4 porphobilinogen + H2O = hydroxymethylbilane + 4 NH4(+). It participates in porphyrin-containing compound metabolism; protoporphyrin-IX biosynthesis; coproporphyrinogen-III from 5-aminolevulinate: step 2/4. Functionally, tetrapolymerization of the monopyrrole PBG into the hydroxymethylbilane pre-uroporphyrinogen in several discrete steps. The sequence is that of Porphobilinogen deaminase from Bacillus thuringiensis (strain Al Hakam).